Reading from the N-terminus, the 462-residue chain is ATP-dependent protease ATPase subunit HslU (462 aa).

Residues Ile-21, 63-68 (GVGKTE), Asp-275, Glu-340, and Arg-412 each bind ATP.

Belongs to the ClpX chaperone family. HslU subfamily. In terms of assembly, a double ring-shaped homohexamer of HslV is capped on each side by a ring-shaped HslU homohexamer. The assembly of the HslU/HslV complex is dependent on binding of ATP.

It is found in the cytoplasm. Functionally, ATPase subunit of a proteasome-like degradation complex; this subunit has chaperone activity. The binding of ATP and its subsequent hydrolysis by HslU are essential for unfolding of protein substrates subsequently hydrolyzed by HslV. HslU recognizes the N-terminal part of its protein substrates and unfolds these before they are guided to HslV for hydrolysis. This is ATP-dependent protease ATPase subunit HslU from Pseudothermotoga lettingae (strain ATCC BAA-301 / DSM 14385 / NBRC 107922 / TMO) (Thermotoga lettingae).